The sequence spans 88 residues: Small ribosomal subunit protein bS16 (88 aa).

It belongs to the bacterial ribosomal protein bS16 family.

This Geobacter sulfurreducens (strain ATCC 51573 / DSM 12127 / PCA) protein is Small ribosomal subunit protein bS16.